We begin with the raw amino-acid sequence, 405 residues long: Calsequestrin-1 (405 aa).

A signal peptide spans 1–34 (MRATDRMGARAVSELRLALLFVLVLGTPRLGVQG). Position 43 is a phosphotyrosine (Y43). Phosphoserine is present on S81. Position 124 is a phosphothreonine (T124). S216 carries the phosphoserine modification. N350 carries an N-linked (GlcNAc...) asparagine glycan. Positions 382–405 (EGEINTEDDDDDDDDDDDDDDDDD) are disordered.

It belongs to the calsequestrin family. As to quaternary structure, monomer; increases in response to a depletion of intracellular calcium. Homodimer. Homotetramer and homopolymer. Can form linear homooligomers. Ca(2+) ions promote oligomerization. Interacts (via C-terminal end and preferentially with the monomeric form) with STIM1; this interaction increases in response to a depletion of intracellular calcium, decreases both STIM1 aggregation and clustering, interaction of STIM1 with ORAI1 and store-operated Ca(2+) entry (SOCE) activity. Interacts with ASPH and TRDN. Post-translationally, N-glycosylated. In terms of tissue distribution, detected in skeletal muscle (at protein level). Detected in skeletal muscle.

The protein resides in the endoplasmic reticulum. It is found in the sarcoplasmic reticulum. The protein localises to the sarcoplasmic reticulum lumen. Its subcellular location is the sarcoplasmic reticulum membrane. It localises to the mitochondrion matrix. In terms of biological role, calsequestrin is a high-capacity, moderate affinity, calcium-binding protein and thus acts as an internal calcium store in muscle. Calcium ions are bound by clusters of acidic residues at the protein surface, often at the interface between subunits. Can bind around 80 Ca(2+) ions. Regulates the release of lumenal Ca(2+) via the calcium release channel RYR1; this plays an important role in triggering muscle contraction. Negatively regulates store-operated Ca(2+) entry (SOCE) activity. This is Calsequestrin-1 (Casq1) from Mus musculus (Mouse).